Reading from the N-terminus, the 211-residue chain is Endonuclease III (211 aa).

In terms of domain architecture, HhH spans 111–130 (AHALESLPGVGHKTANVVLN). Residues cysteine 190, cysteine 197, cysteine 200, and cysteine 206 each coordinate [4Fe-4S] cluster.

Belongs to the Nth/MutY family. The cofactor is [4Fe-4S] cluster.

It catalyses the reaction 2'-deoxyribonucleotide-(2'-deoxyribose 5'-phosphate)-2'-deoxyribonucleotide-DNA = a 3'-end 2'-deoxyribonucleotide-(2,3-dehydro-2,3-deoxyribose 5'-phosphate)-DNA + a 5'-end 5'-phospho-2'-deoxyribonucleoside-DNA + H(+). DNA repair enzyme that has both DNA N-glycosylase activity and AP-lyase activity. The DNA N-glycosylase activity releases various damaged pyrimidines from DNA by cleaving the N-glycosidic bond, leaving an AP (apurinic/apyrimidinic) site. The AP-lyase activity cleaves the phosphodiester bond 3' to the AP site by a beta-elimination, leaving a 3'-terminal unsaturated sugar and a product with a terminal 5'-phosphate. The polypeptide is Endonuclease III (Treponema pallidum (strain Nichols)).